Here is a 46-residue protein sequence, read N- to C-terminus: Large ribosomal subunit protein bL34 (46 aa).

The segment at 25 to 46 (TASGRQVLRRRRAKGRYRLAVS) is disordered. Basic residues predominate over residues 31–46 (VLRRRRAKGRYRLAVS).

This sequence belongs to the bacterial ribosomal protein bL34 family.

This chain is Large ribosomal subunit protein bL34, found in Synechococcus sp. (strain JA-3-3Ab) (Cyanobacteria bacterium Yellowstone A-Prime).